A 162-amino-acid chain; its full sequence is MEFLDATFFAFVGLVLFLALVVYLKVPGMMAKSLDDRADQIRNELAEAKRLREEAQHLLVEYQRKRKEAEAEAAHIVAAAEREAEMLTAEAMKKTEEFVANRTALSEQKIKQAEVEAMKAVRSAAVDLAIAAAETVLAKRADAKVQSELFGNAVGQVKTRLN.

The chain crosses the membrane as a helical span at residues 3–23 (FLDATFFAFVGLVLFLALVVY).

This sequence belongs to the ATPase B chain family. As to quaternary structure, F-type ATPases have 2 components, F(1) - the catalytic core - and F(0) - the membrane proton channel. F(1) has five subunits: alpha(3), beta(3), gamma(1), delta(1), epsilon(1). F(0) has three main subunits: a(1), b(2) and c(10-14). The alpha and beta chains form an alternating ring which encloses part of the gamma chain. F(1) is attached to F(0) by a central stalk formed by the gamma and epsilon chains, while a peripheral stalk is formed by the delta and b chains.

The protein resides in the cell inner membrane. Functionally, f(1)F(0) ATP synthase produces ATP from ADP in the presence of a proton or sodium gradient. F-type ATPases consist of two structural domains, F(1) containing the extramembraneous catalytic core and F(0) containing the membrane proton channel, linked together by a central stalk and a peripheral stalk. During catalysis, ATP synthesis in the catalytic domain of F(1) is coupled via a rotary mechanism of the central stalk subunits to proton translocation. Component of the F(0) channel, it forms part of the peripheral stalk, linking F(1) to F(0). In Rhizobium johnstonii (strain DSM 114642 / LMG 32736 / 3841) (Rhizobium leguminosarum bv. viciae), this protein is ATP synthase subunit b 1.